The chain runs to 234 residues: Probable transcriptional regulatory protein PSPTO_3162 (234 aa).

The protein belongs to the TACO1 family.

It is found in the cytoplasm. The chain is Probable transcriptional regulatory protein PSPTO_3162 from Pseudomonas syringae pv. tomato (strain ATCC BAA-871 / DC3000).